We begin with the raw amino-acid sequence, 247 residues long: Ubiquinone biosynthesis O-methyltransferase (247 aa).

Residues Arg39, Gly70, Asp91, and Met134 each coordinate S-adenosyl-L-methionine.

Belongs to the methyltransferase superfamily. UbiG/COQ3 family.

The catalysed reaction is a 3-demethylubiquinol + S-adenosyl-L-methionine = a ubiquinol + S-adenosyl-L-homocysteine + H(+). It carries out the reaction a 3-(all-trans-polyprenyl)benzene-1,2-diol + S-adenosyl-L-methionine = a 2-methoxy-6-(all-trans-polyprenyl)phenol + S-adenosyl-L-homocysteine + H(+). It functions in the pathway cofactor biosynthesis; ubiquinone biosynthesis. Functionally, O-methyltransferase that catalyzes the 2 O-methylation steps in the ubiquinone biosynthetic pathway. The polypeptide is Ubiquinone biosynthesis O-methyltransferase (Cereibacter sphaeroides (strain ATCC 17023 / DSM 158 / JCM 6121 / CCUG 31486 / LMG 2827 / NBRC 12203 / NCIMB 8253 / ATH 2.4.1.) (Rhodobacter sphaeroides)).